Here is a 434-residue protein sequence, read N- to C-terminus: Chaperone SurA (434 aa).

A signal peptide spans 1 to 29 (MKTLRLNFRSAILKALGALLLLQGCLAHA). 2 consecutive PpiC domains span residues 180–281 (AEEY…AMLE) and 290–389 (VEQS…QVQD).

The protein resides in the periplasm. The catalysed reaction is [protein]-peptidylproline (omega=180) = [protein]-peptidylproline (omega=0). Chaperone involved in the correct folding and assembly of outer membrane proteins. Recognizes specific patterns of aromatic residues and the orientation of their side chains, which are found more frequently in integral outer membrane proteins. May act in both early periplasmic and late outer membrane-associated steps of protein maturation. The chain is Chaperone SurA from Hahella chejuensis (strain KCTC 2396).